The following is a 55-amino-acid chain: uncharacterized protein (55 aa).

This is an uncharacterized protein from Tibrogargan virus (strain CS132) (TIBV).